Consider the following 541-residue polypeptide: Nectin 1b (541 aa).

The N-terminal stretch at methionine 1 to serine 21 is a signal peptide. Topologically, residues valine 22 to alanine 396 are extracellular. Residues asparagine 51, asparagine 105, asparagine 180, asparagine 242, asparagine 326, asparagine 337, and asparagine 372 are each glycosylated (N-linked (GlcNAc...) asparagine). One can recognise an Ig-like V-type domain in the interval glycine 77–threonine 182. A disulfide bridge links cysteine 84 with cysteine 165. Ig-like C2-type domains follow at residues proline 187–asparagine 282 and proline 287–threonine 374. Cystine bridges form between cysteine 212-cysteine 266 and cysteine 309-cysteine 356. A helical membrane pass occupies residues isoleucine 397–phenylalanine 417. The Cytoplasmic segment spans residues leucine 418–valine 541. Residues tyrosine 440–aspartate 507 are disordered. The segment covering serine 479 to arginine 493 has biased composition (basic and acidic residues).

Belongs to the nectin family. As to quaternary structure, cis- and trans-homodimer. Can form trans-heterodimers. As to expression, expressed in the developing eye and nervous system.

The protein resides in the cell membrane. Its subcellular location is the cell junction. The protein localises to the adherens junction. In terms of biological role, cell adhesion molecule that promotes cell-cell contacts and plays important roles in the development of the nervous system. Acts by forming homophilic or heterophilic trans-dimers. The polypeptide is Nectin 1b (Danio rerio (Zebrafish)).